We begin with the raw amino-acid sequence, 440 residues long: uncharacterized protein (440 aa).

The next 12 membrane-spanning stretches (helical) occupy residues 24-44, 47-67, 93-113, 117-137, 155-175, 183-203, 229-249, 276-296, 323-343, 346-366, 379-399, and 400-420; these read VVIGLGSMIGAGIFAALAPAA, AGSGLLLGLAVAAVVAYCNAI, FWGYLAGWGFVVGKTASCAAM, VGFYVWPAQAHAVAVAVVVAL, IVAVVLVVLTAVVVAAYGSGA, IGVDAHVWGMLQAAGLLFFAF, LALGITLAVYALVAVAVIAVL, VVQIGAAVAALGSLLALILGV, PFRAELVVGAVVAALAATADI, AIGFSSFGVLVYYAIANASAL, IPLVGLIGCVVLAFALPLSSV, and AAGAAVLGVGVAAYGVRRIIT.

It belongs to the amino acid-polyamine-organocation (APC) superfamily.

It localises to the cell membrane. In terms of biological role, probable amino-acid or metabolite transport protein. This is an uncharacterized protein from Mycobacterium bovis (strain ATCC BAA-935 / AF2122/97).